A 713-amino-acid chain; its full sequence is Peroxisomal biogenesis factor 8 (713 aa).

The tract at residues 1–31 is disordered; sequence MYRLGSQGRSIQSQLQNGDSSSGRPLQLQGT. Positions 7–30 are enriched in polar residues; that stretch reads QGRSIQSQLQNGDSSSGRPLQLQG. The short motif at 711-713 is the Microbody targeting signal element; sequence AKL.

As to quaternary structure, interacts with PEX5 (via N-terminus).

The protein resides in the peroxisome membrane. Its function is as follows. Essential component of the machinery required for the import of both PTS1 and PTS2 (and perhaps all) peroxisomal matrix proteins. Binding of PEX8 to the N-terminus of PEX5 cargo receptor induces a conformational change of the TPR domains and decrease their binding affinity to cargo, facilitating the release of the PTS1 proteins within the peroxisome. The sequence is that of Peroxisomal biogenesis factor 8 from Komagataella phaffii (strain GS115 / ATCC 20864) (Yeast).